A 605-amino-acid polypeptide reads, in one-letter code: Elongation factor 4 (605 aa).

The region spanning 11–193 (KNIRNFSIIA…TLVDVIPAPT (183 aa)) is the tr-type G domain. GTP contacts are provided by residues 23 to 28 (DHGKST) and 140 to 143 (NKID).

Belongs to the TRAFAC class translation factor GTPase superfamily. Classic translation factor GTPase family. LepA subfamily.

Its subcellular location is the cell inner membrane. It carries out the reaction GTP + H2O = GDP + phosphate + H(+). Its function is as follows. Required for accurate and efficient protein synthesis under certain stress conditions. May act as a fidelity factor of the translation reaction, by catalyzing a one-codon backward translocation of tRNAs on improperly translocated ribosomes. Back-translocation proceeds from a post-translocation (POST) complex to a pre-translocation (PRE) complex, thus giving elongation factor G a second chance to translocate the tRNAs correctly. Binds to ribosomes in a GTP-dependent manner. The protein is Elongation factor 4 of Acinetobacter baumannii (strain SDF).